The following is a 168-amino-acid chain: MIAIYPGSFDPITLGHIDIIERGCNLFEKVIVAVLRNQSKTSLFTIEQRLNQICHSTKHLLNVEVASFDGLAVNYAKMQQAKVLIRGLRVLSDFEKELQMAHTNKTLSPEIETVFLATSNEYSFLSSSVVKEIAVFGGSVDHLVPQHIAIDIYKCYDKTQPKPILNQR.

Ser-8 contributes to the substrate binding site. ATP-binding positions include 8 to 9 and His-16; that span reads SF. Residues Lys-40, Ala-72, and Arg-86 each coordinate substrate. Residues 87-89, Glu-97, and 122-128 each bind ATP; these read GLR and YSFLSSS.

This sequence belongs to the bacterial CoaD family. In terms of assembly, homohexamer. Mg(2+) serves as cofactor.

It localises to the cytoplasm. The enzyme catalyses (R)-4'-phosphopantetheine + ATP + H(+) = 3'-dephospho-CoA + diphosphate. Its pathway is cofactor biosynthesis; coenzyme A biosynthesis; CoA from (R)-pantothenate: step 4/5. Functionally, reversibly transfers an adenylyl group from ATP to 4'-phosphopantetheine, yielding dephospho-CoA (dPCoA) and pyrophosphate. The chain is Phosphopantetheine adenylyltransferase from Trichodesmium erythraeum (strain IMS101).